The sequence spans 356 residues: Peritrophin-44 (356 aa).

The signal sequence occupies residues 1 to 23 (MKELQITTGCLLLMVAAIGKTSA). Chitin-binding type-2 domains follow at residues 28 to 85 (SETC…KCIS), 88 to 146 (KNAC…ECTA), 147 to 201 (DSIC…PCLA), 220 to 283 (NFVC…PCTF), and 286 to 355 (CGNL…YKLC). Cysteines 62 and 75 form a disulfide. N114 carries N-linked (GlcNAc...) asparagine glycosylation. Intrachain disulfides connect C122–C135, C181–C193, and C262–C273. An N-linked (GlcNAc...) asparagine glycan is attached at N309.

Glycosylated. Larval peritrophic membrane.

Functionally, may have roles in the maintenance of peritrophic membrane structure and in the determination of the porosity of the peritrophic membrane. May bind chitin or related oligosaccharide structures. This is Peritrophin-44 from Lucilia cuprina (Green bottle fly).